The primary structure comprises 272 residues: 2-amino-3,7-dideoxy-D-threo-hept-6-ulosonate synthase (272 aa).

Aspartate 33 (proton acceptor) is an active-site residue. 1-deoxy-D-threo-hexo-2,5-diulose 6-phosphate is bound by residues 33–37 (DHGVS) and 153–155 (YPR). Tyrosine 153 functions as the Proton donor in the catalytic mechanism. Catalysis depends on lysine 184, which acts as the Schiff-base intermediate with substrate. 1-deoxy-D-threo-hexo-2,5-diulose 6-phosphate contacts are provided by residues 209-210 (GG) and 237-238 (GR).

This sequence belongs to the DeoC/FbaB aldolase family. ADHS subfamily. Homodecamer.

The enzyme catalyses 1-deoxy-D-threo-hexo-2,5-diulose 6-phosphate + L-aspartate 4-semialdehyde = 2,3-dioxopropyl phosphate + 2-amino-2,3,7-trideoxy-D-lyxo-hept-6-ulosonate. Functionally, catalyzes a transaldol reaction between 6-deoxy-5-ketofructose 1-phosphate (DKFP) and L-aspartate semialdehyde (ASA) with an elimination of hydroxypyruvaldehyde phosphate to yield 2-amino-3,7-dideoxy-D-threo-hept-6-ulosonate (ADH). Plays a key role in an alternative pathway of the biosynthesis of 3-dehydroquinate (DHQ), which is involved in the canonical pathway for the biosynthesis of aromatic amino acids. This is 2-amino-3,7-dideoxy-D-threo-hept-6-ulosonate synthase from Methanococcus vannielii (strain ATCC 35089 / DSM 1224 / JCM 13029 / OCM 148 / SB).